The sequence spans 488 residues: Serine protease HTR4 (488 aa).

An N-terminal signal peptide occupies residues 1-35; sequence MSRSKMSSQRLWAVRAQFLLLWLLLWAAPVPWAEA. The IGFBP N-terminal domain occupies 40 to 118; the sequence is VSLPCPDACD…RAWLGTCGCA (79 aa). Disulfide bonds link Cys44–Cys70, Cys48–Cys72, Cys53–Cys73, Cys59–Cys76, Cys84–Cys98, and Cys92–Cys115. The segment at 213-373 is serine protease; the sequence is GSGFIVSEDG…IPSDRIRQFL (161 aa). Residues His229, Asp259, and Ser337 each act as charge relay system in the active site. One can recognise a PDZ domain in the interval 384-476; sequence KAPLQKKYLG…LSIIVLRGSQ (93 aa).

This sequence belongs to the peptidase S1C family.

The protein resides in the secreted. Its function is as follows. Serine protease. The chain is Serine protease HTR4 (Htra4) from Rattus norvegicus (Rat).